Reading from the N-terminus, the 472-residue chain is L-fuculokinase (472 aa).

This sequence belongs to the FGGY kinase family. Requires a divalent metal cation as cofactor.

It catalyses the reaction L-fuculose + ATP = L-fuculose 1-phosphate + ADP + H(+). It functions in the pathway carbohydrate degradation; L-fucose degradation; L-lactaldehyde and glycerone phosphate from L-fucose: step 2/3. Catalyzes the phosphorylation of L-fuculose. This chain is L-fuculokinase, found in Escherichia coli O157:H7.